A 150-amino-acid polypeptide reads, in one-letter code: Arginine repressor (150 aa).

This sequence belongs to the ArgR family.

Its subcellular location is the cytoplasm. It functions in the pathway amino-acid biosynthesis; L-arginine biosynthesis [regulation]. Its function is as follows. Regulates arginine biosynthesis genes. This chain is Arginine repressor, found in Psychromonas ingrahamii (strain DSM 17664 / CCUG 51855 / 37).